We begin with the raw amino-acid sequence, 430 residues long: MEKIIVRGGKQLNGSVKMEGAKNAVLPVIAATLLASKGTSVLKNVPNLSDVFTINEVLKYLNADVSFVNDEVTVDATGEITSDAPFEYVRKMRASIVVMGPLLARTGSARVALPGGCAIGSRPVDLHLKGFEAMGAVVKIENGYIEATAEKLVGAKVYLDFPSVGATQNIMMAATLAEGTTVIENVAREPEIVDLANFLNQMGARVIGAGTEVIRIEGVKELTATEHSIIPDRIEAGTFMIAAAITGGNVLIEDAVPEHISSLIAKLEEMGVQIIEEENGIRVIGPDKLKAVDVKTMPHPGFPTDMQSQMMVIQMLSEGTSIMTETVFENRFMHVEEMRRMNADMKIEGHSVIISGPAKLQGAEVAATDLRAAAALILAGLVADGYTQVTELKYLDRGYNNFHGKLQALGADVERVDDSKVDVTNLASLF.

22 to 23 (KN) is a phosphoenolpyruvate binding site. Position 93 (Arg-93) interacts with UDP-N-acetyl-alpha-D-glucosamine. Cys-117 serves as the catalytic Proton donor. Cys-117 carries the post-translational modification 2-(S-cysteinyl)pyruvic acid O-phosphothioketal. UDP-N-acetyl-alpha-D-glucosamine is bound by residues 122–126 (RPVDL), Asp-305, and Val-327.

This sequence belongs to the EPSP synthase family. MurA subfamily.

Its subcellular location is the cytoplasm. The enzyme catalyses phosphoenolpyruvate + UDP-N-acetyl-alpha-D-glucosamine = UDP-N-acetyl-3-O-(1-carboxyvinyl)-alpha-D-glucosamine + phosphate. Its pathway is cell wall biogenesis; peptidoglycan biosynthesis. Cell wall formation. Adds enolpyruvyl to UDP-N-acetylglucosamine. This chain is UDP-N-acetylglucosamine 1-carboxyvinyltransferase 1, found in Listeria monocytogenes serovar 1/2a (strain ATCC BAA-679 / EGD-e).